The primary structure comprises 471 residues: Putative multidrug resistance protein MdtD (471 aa).

Residues 1 to 11 are Periplasmic-facing; it reads MTDLPDSTRWQ. The chain crosses the membrane as a helical span at residues 12–32; that stretch reads LWIVAFGFFMQSLDTTIVNTA. Residues 33-48 are Cytoplasmic-facing; that stretch reads LPSMAQSLGESPLHMH. The chain crosses the membrane as a helical span at residues 49–69; it reads MVIVSYVLTVAVMLPASGWLA. The Periplasmic portion of the chain corresponds to 70–76; sequence DKVGVRN. The chain crosses the membrane as a helical span at residues 77–97; the sequence is IFFTAIVLFTLGSLFCALSGT. Topologically, residues 98–101 are cytoplasmic; sequence LNEL. A helical membrane pass occupies residues 102 to 124; that stretch reads LLARALQGVGGAMMVPVGRLTVM. Topologically, residues 125–137 are periplasmic; the sequence is KIVPREQYMAAMT. The helical transmembrane segment at 138 to 158 threads the bilayer; sequence FVTLPGQVGPLLGPALGGLLV. At 159 to 164 the chain is on the cytoplasmic side; sequence EYASWH. The chain crosses the membrane as a helical span at residues 165-185; it reads WIFLINIPVGIIGAIATLMLM. Residues 186-196 lie on the Periplasmic side of the membrane; that stretch reads PNYTMQTRRFD. The chain crosses the membrane as a helical span at residues 197 to 217; sequence LSGFLLLAVGMAVLTLALDGS. Over 218–224 the chain is Cytoplasmic; sequence KGTGLSP. Residues 225-245 traverse the membrane as a helical segment; it reads LAIAGLVAVGVVALVLYLLHA. At 246–262 the chain is on the periplasmic side; it reads RNNNRALFSLKLFRTRT. Residues 263-283 form a helical membrane-spanning segment; it reads FSLGLAGSFAGRIGSGMLPFM. Residues 284–285 lie on the Cytoplasmic side of the membrane; the sequence is TP. The helical transmembrane segment at 286 to 306 threads the bilayer; it reads VFLQIGLGFSPFHAGLMMIPM. At 307 to 341 the chain is on the periplasmic side; sequence VLGSMGMKRIVVQVVNRFGYRRVLVATTLGLSLVT. Residues 342 to 362 form a helical membrane-spanning segment; that stretch reads MLFMTTALLGWYYVLPFVLFL. At 363 to 395 the chain is on the cytoplasmic side; sequence QGMVNSTRFSSMNTLTLKDLPDNLASSGNSLLS. The helical transmembrane segment at 396–416 threads the bilayer; that stretch reads MIMQLSMSIGVTIAGLLLGLF. Over 417–430 the chain is Periplasmic; the sequence is GSQHVSVDSGTTQT. A helical membrane pass occupies residues 431-451; that stretch reads VFMYTWLSMAFIIALPAFIFA. The Cytoplasmic segment spans residues 452–471; it reads RVPNDTHQNVAISRRKRSAQ.

Belongs to the major facilitator superfamily. TCR/Tet family.

The protein localises to the cell inner membrane. The protein is Putative multidrug resistance protein MdtD of Escherichia coli O7:K1 (strain IAI39 / ExPEC).